Reading from the N-terminus, the 719-residue chain is Polyribonucleotide nucleotidyltransferase (719 aa).

Positions 491 and 497 each coordinate Mg(2+). Residues 558–617 enclose the KH domain; the sequence is PRMLTIKINPEKIRDVIGKGGATIRALTEETGTQIDISDDGTIVIASVDETQAKEAQRRI. An S1 motif domain is found at 627 to 695; the sequence is GQIYDGSVLR…DKGRLRLSIK (69 aa).

This sequence belongs to the polyribonucleotide nucleotidyltransferase family. Mg(2+) serves as cofactor.

Its subcellular location is the cytoplasm. The catalysed reaction is RNA(n+1) + phosphate = RNA(n) + a ribonucleoside 5'-diphosphate. In terms of biological role, involved in mRNA degradation. Catalyzes the phosphorolysis of single-stranded polyribonucleotides processively in the 3'- to 5'-direction. This is Polyribonucleotide nucleotidyltransferase from Bordetella bronchiseptica (strain ATCC BAA-588 / NCTC 13252 / RB50) (Alcaligenes bronchisepticus).